Consider the following 563-residue polypeptide: Zinc finger protein 503 (563 aa).

Polar residues predominate over residues 1–10 (MITSPSASRN). Disordered stretches follow at residues 1–48 (MITS…PLRQ) and 101–226 (SQIG…TSVS). 2 stretches are compositionally biased toward low complexity: residues 19-33 (SSSS…AVAS) and 112-122 (SKLSSVTSNGS). Over residues 174–194 (ATCQPFTPRTGSPNSSTSASP) the composition is skewed to polar residues. The span at 199-211 (GKGERDEKKDSDC) shows a compositional bias: basic and acidic residues. Residues 212-226 (NKNCSSDGSAPTSVS) show a composition bias toward polar residues. The C2H2-type zinc-finger motif lies at 431–459 (HVCNWVSANGPCDKRFSSSEELLNHLRTH).

The protein belongs to the Elbow/Noc family. Interacts with nlz1.

The protein resides in the nucleus. In terms of biological role, required for segmental gene expression during hindbrain development. May function as a transcriptional repressor. The polypeptide is Zinc finger protein 503 (znf503) (Danio rerio (Zebrafish)).